The chain runs to 240 residues: UDP-2,3-diacylglucosamine hydrolase (240 aa).

Mn(2+) contacts are provided by aspartate 8, histidine 10, aspartate 41, asparagine 79, and histidine 114. Residue asparagine 79 to arginine 80 participates in substrate binding. Substrate is bound by residues aspartate 122, serine 160, asparagine 164, lysine 167, and histidine 195. Mn(2+) is bound by residues histidine 195 and histidine 197.

It belongs to the LpxH family. It depends on Mn(2+) as a cofactor.

The protein localises to the cell inner membrane. The enzyme catalyses UDP-2-N,3-O-bis[(3R)-3-hydroxytetradecanoyl]-alpha-D-glucosamine + H2O = 2-N,3-O-bis[(3R)-3-hydroxytetradecanoyl]-alpha-D-glucosaminyl 1-phosphate + UMP + 2 H(+). Its pathway is glycolipid biosynthesis; lipid IV(A) biosynthesis; lipid IV(A) from (3R)-3-hydroxytetradecanoyl-[acyl-carrier-protein] and UDP-N-acetyl-alpha-D-glucosamine: step 4/6. Hydrolyzes the pyrophosphate bond of UDP-2,3-diacylglucosamine to yield 2,3-diacylglucosamine 1-phosphate (lipid X) and UMP by catalyzing the attack of water at the alpha-P atom. Involved in the biosynthesis of lipid A, a phosphorylated glycolipid that anchors the lipopolysaccharide to the outer membrane of the cell. The sequence is that of UDP-2,3-diacylglucosamine hydrolase from Pectobacterium carotovorum subsp. carotovorum (strain PC1).